Reading from the N-terminus, the 453-residue chain is Glutamate-rich protein 5 (453 aa).

Disordered regions lie at residues 1 to 38 (MGCS…ALGR), 66 to 377 (NGVQ…EHPA), and 394 to 453 (TNEE…HSML). A compositionally biased stretch (basic and acidic residues) spans 11-21 (AGDDNRLRSAT). At Ser-155 the chain carries Phosphoserine. Polar residues-rich tracts occupy residues 230-243 (LQET…SQPL) and 271-283 (QETL…SQLR). Basic and acidic residues-rich tracts occupy residues 305–332 (EEEK…EHGG), 364–374 (IQPERTVESME), and 394–403 (TNEEDQHIEG). Over residues 404-413 (ETGETVETEM) the composition is skewed to acidic residues. Basic and acidic residues predominate over residues 414 to 424 (ESEKVSEGAET).

The polypeptide is Glutamate-rich protein 5 (ERICH5) (Bos taurus (Bovine)).